Consider the following 114-residue polypeptide: MHELSLVSSILDIIEDYAAQDGFRRVNNLRLSCGRLSGVDLQCLRFAFEVLSRETRSEGATLEIDFLPIVISCLNCGEDTEVEYVEASCPECGSENVLLAGGTEELRLLELDVD.

H2 serves as a coordination point for Ni(2+). Residues C73, C76, C89, and C92 each contribute to the Zn(2+) site.

The protein belongs to the HypA/HybF family.

Its function is as follows. Involved in the maturation of [NiFe] hydrogenases. Required for nickel insertion into the metal center of the hydrogenase. This is Hydrogenase maturation factor HypA from Syntrophus aciditrophicus (strain SB).